The sequence spans 507 residues: ATP synthase subunit alpha, chloroplastic (507 aa).

170-177 (GDRQTGKT) serves as a coordination point for ATP.

It belongs to the ATPase alpha/beta chains family. F-type ATPases have 2 components, CF(1) - the catalytic core - and CF(0) - the membrane proton channel. CF(1) has five subunits: alpha(3), beta(3), gamma(1), delta(1), epsilon(1). CF(0) has four main subunits: a, b, b' and c.

Its subcellular location is the plastid. The protein localises to the chloroplast thylakoid membrane. The catalysed reaction is ATP + H2O + 4 H(+)(in) = ADP + phosphate + 5 H(+)(out). Its function is as follows. Produces ATP from ADP in the presence of a proton gradient across the membrane. The alpha chain is a regulatory subunit. The chain is ATP synthase subunit alpha, chloroplastic from Amborella trichopoda.